A 485-amino-acid chain; its full sequence is N-succinylglutamate 5-semialdehyde dehydrogenase (485 aa).

Residue Gly220–Gly225 coordinates NAD(+). Active-site residues include Glu243 and Cys278.

Belongs to the aldehyde dehydrogenase family. AstD subfamily.

It catalyses the reaction N-succinyl-L-glutamate 5-semialdehyde + NAD(+) + H2O = N-succinyl-L-glutamate + NADH + 2 H(+). Its pathway is amino-acid degradation; L-arginine degradation via AST pathway; L-glutamate and succinate from L-arginine: step 4/5. Functionally, catalyzes the NAD-dependent reduction of succinylglutamate semialdehyde into succinylglutamate. This chain is N-succinylglutamate 5-semialdehyde dehydrogenase, found in Vibrio campbellii (strain ATCC BAA-1116).